Consider the following 262-residue polypeptide: MGKYMRKFRGATGEELAAMEVTQVVGVRTRSRSAAAAGATTTKVKAASAASTRRRKALLPTAVVGTTRRDGGSCYLQLRSRMLFMAPPRPAPAARAPVVAEAAGSGNGAAAHAAAGLSRCSSTASSVDAAAQDRSLACRSDVAEAGSEHVPEGSASDSASGRDRERRETTPSSFLPGEVSDLESDLAGGQKRSRPLPSAATASAQQATRPKIPPAAEIEAFFAAAEEAEAKRFAAKYNFDVVRGVPLDAGRFEWTPVVSSRS.

The disordered stretch occupies residues 140-212 (SDVAEAGSEH…SAQQATRPKI (73 aa)). Positions 160-169 (SGRDRERRET) are enriched in basic and acidic residues. Positions 198-208 (SAATASAQQAT) are enriched in low complexity.

It belongs to the CDI family. ICK/KRP subfamily. Expressed in roots, stems, leaves and apex.

Its function is as follows. Regulates the production of endosperm cells, affecting seed filling and embryo development. Regulates endoreduplication of endosperm cells. May play a role in the exit from the mitotic cell cycle during rice grain formation. Inhibitis leaf elongation rates by decreasing cell number, that is partly compensated by increased cell size. May not affect growth rate or cell size of the primary root. This is Cyclin-dependent kinase inhibitor 1 (KRP1) from Oryza sativa subsp. japonica (Rice).